A 350-amino-acid polypeptide reads, in one-letter code: Hydroxymethylglutaryl-CoA synthase (350 aa).

Glu83 (proton donor/acceptor) is an active-site residue. The Acyl-thioester intermediate role is filled by Cys115. The (3S)-3-hydroxy-3-methylglutaryl-CoA site is built by Cys115 and Thr156. Arg204 serves as a coordination point for CoA. (3S)-3-hydroxy-3-methylglutaryl-CoA contacts are provided by Thr206 and His239. The active-site Proton donor/acceptor is the His239. CoA is bound at residue Lys244. The (3S)-3-hydroxy-3-methylglutaryl-CoA site is built by Asn271 and Ser301.

It belongs to the thiolase-like superfamily. Archaeal HMG-CoA synthase family. In terms of assembly, interacts with acetoacetyl-CoA thiolase that catalyzes the precedent step in the pathway and with a DUF35 protein. The acetoacetyl-CoA thiolase/HMG-CoA synthase complex channels the intermediate via a fused CoA-binding site, which allows for efficient coupling of the endergonic thiolase reaction with the exergonic HMGCS reaction.

It carries out the reaction acetoacetyl-CoA + acetyl-CoA + H2O = (3S)-3-hydroxy-3-methylglutaryl-CoA + CoA + H(+). The protein operates within metabolic intermediate biosynthesis; (R)-mevalonate biosynthesis; (R)-mevalonate from acetyl-CoA: step 2/3. Catalyzes the condensation of acetyl-CoA with acetoacetyl-CoA to form 3-hydroxy-3-methylglutaryl-CoA (HMG-CoA). Functions in the mevalonate (MVA) pathway leading to isopentenyl diphosphate (IPP), a key precursor for the biosynthesis of isoprenoid compounds that are building blocks of archaeal membrane lipids. The sequence is that of Hydroxymethylglutaryl-CoA synthase from Thermococcus sibiricus (strain DSM 12597 / MM 739).